The chain runs to 279 residues: Tryptophan synthase alpha chain (279 aa).

Catalysis depends on proton acceptor residues E50 and D61.

This sequence belongs to the TrpA family. In terms of assembly, tetramer of two alpha and two beta chains.

It catalyses the reaction (1S,2R)-1-C-(indol-3-yl)glycerol 3-phosphate + L-serine = D-glyceraldehyde 3-phosphate + L-tryptophan + H2O. It participates in amino-acid biosynthesis; L-tryptophan biosynthesis; L-tryptophan from chorismate: step 5/5. Its function is as follows. The alpha subunit is responsible for the aldol cleavage of indoleglycerol phosphate to indole and glyceraldehyde 3-phosphate. The polypeptide is Tryptophan synthase alpha chain (Brucella melitensis biotype 1 (strain ATCC 23456 / CCUG 17765 / NCTC 10094 / 16M)).